A 317-amino-acid chain; its full sequence is tRNA dimethylallyltransferase (317 aa).

14–21 (GPTAVGKT) is a binding site for ATP. Position 16–21 (16–21 (TAVGKT)) interacts with substrate. Residues 39–42 (DSMQ) are interaction with substrate tRNA.

The protein belongs to the IPP transferase family. Monomer. The cofactor is Mg(2+).

The catalysed reaction is adenosine(37) in tRNA + dimethylallyl diphosphate = N(6)-dimethylallyladenosine(37) in tRNA + diphosphate. In terms of biological role, catalyzes the transfer of a dimethylallyl group onto the adenine at position 37 in tRNAs that read codons beginning with uridine, leading to the formation of N6-(dimethylallyl)adenosine (i(6)A). This Bacillus cereus (strain Q1) protein is tRNA dimethylallyltransferase.